The following is a 199-amino-acid chain: Neurotrophic factor BDNF precursor form (199 aa).

Residues Gly1–Asn23 are disordered. A propeptide spanning residues Gly1–Arg100 is cleaved from the precursor. A compositionally biased stretch (polar residues) spans Thr12–Asn23. A glycan (N-linked (GlcNAc...) asparagine) is linked at Asn93. Cys113 and Cys180 are oxidised to a cystine.

It belongs to the NGF-beta family.

The protein localises to the secreted. In terms of biological role, promotes the survival of neuronal populations that are all located either in the central nervous system or directly connected to it. This chain is Neurotrophic factor BDNF precursor form (BDNF), found in Morelia spilota (Carpet python).